We begin with the raw amino-acid sequence, 382 residues long: Chaperone protein DnaJ (382 aa).

A J domain is found at 6-70; sequence DYYEILGLPK…EKRAQYDRFG (65 aa). A CR-type zinc finger spans residues 131–213; the sequence is GVRKDIDIPR…CGGAGRVRNK (83 aa). Zn(2+) is bound by residues Cys144, Cys147, Cys161, Cys164, Cys187, Cys190, Cys201, and Cys204. 4 CXXCXGXG motif repeats span residues 144–151, 161–168, 187–194, and 201–208; these read CSTCSGTG, CPTCGGTG, CSTCHGRG, and CPVCGGAG. The disordered stretch occupies residues 146–168; the sequence is TCSGTGAKPGTSPKRCPTCGGTG. The disordered stretch occupies residues 348-382; sequence FENLSKGKKPQEEEKSKAEKHKKGIFEKVKDAFES. The segment covering 371–382 has biased composition (basic and acidic residues); sequence GIFEKVKDAFES.

It belongs to the DnaJ family. As to quaternary structure, homodimer. Zn(2+) is required as a cofactor.

It is found in the cytoplasm. In terms of biological role, participates actively in the response to hyperosmotic and heat shock by preventing the aggregation of stress-denatured proteins and by disaggregating proteins, also in an autonomous, DnaK-independent fashion. Unfolded proteins bind initially to DnaJ; upon interaction with the DnaJ-bound protein, DnaK hydrolyzes its bound ATP, resulting in the formation of a stable complex. GrpE releases ADP from DnaK; ATP binding to DnaK triggers the release of the substrate protein, thus completing the reaction cycle. Several rounds of ATP-dependent interactions between DnaJ, DnaK and GrpE are required for fully efficient folding. Also involved, together with DnaK and GrpE, in the DNA replication of plasmids through activation of initiation proteins. The protein is Chaperone protein DnaJ of Methanosarcina acetivorans (strain ATCC 35395 / DSM 2834 / JCM 12185 / C2A).